Consider the following 94-residue polypeptide: Large ribosomal subunit protein bL27 (94 aa).

A propeptide spanning residues 1 to 9 is cleaved from the precursor; it reads MLKMNLQFF.

It belongs to the bacterial ribosomal protein bL27 family. The N-terminus is cleaved by ribosomal processing cysteine protease Prp.

This chain is Large ribosomal subunit protein bL27, found in Halalkalibacterium halodurans (strain ATCC BAA-125 / DSM 18197 / FERM 7344 / JCM 9153 / C-125) (Bacillus halodurans).